Consider the following 241-residue polypeptide: Transmembrane protein 176A (241 aa).

The residue at position 38 (Ser38) is a Phosphoserine. 4 helical membrane passes run 65–85, 93–113, 127–147, and 193–213; these read WVMQ…LYIF, SGAP…AFIY, LLAL…AGRF, and LFIS…LASL.

This sequence belongs to the TMEM176 family. Interacts with MCOLN2.

The protein resides in the membrane. The polypeptide is Transmembrane protein 176A (TMEM176A) (Bos taurus (Bovine)).